Consider the following 424-residue polypeptide: Histidinol dehydrogenase (424 aa).

Residues Tyr-121, Gln-183, and Asn-206 each coordinate NAD(+). The substrate site is built by Ser-229, Gln-251, and His-254. Residues Gln-251 and His-254 each contribute to the Zn(2+) site. Catalysis depends on proton acceptor residues Glu-319 and His-320. 4 residues coordinate substrate: His-320, Asp-353, Glu-407, and His-412. Asp-353 provides a ligand contact to Zn(2+). Residue His-412 coordinates Zn(2+).

Belongs to the histidinol dehydrogenase family. Requires Zn(2+) as cofactor.

The enzyme catalyses L-histidinol + 2 NAD(+) + H2O = L-histidine + 2 NADH + 3 H(+). It participates in amino-acid biosynthesis; L-histidine biosynthesis; L-histidine from 5-phospho-alpha-D-ribose 1-diphosphate: step 9/9. Functionally, catalyzes the sequential NAD-dependent oxidations of L-histidinol to L-histidinaldehyde and then to L-histidine. The polypeptide is Histidinol dehydrogenase (Halalkalibacterium halodurans (strain ATCC BAA-125 / DSM 18197 / FERM 7344 / JCM 9153 / C-125) (Bacillus halodurans)).